A 430-amino-acid chain; its full sequence is Putative glycylpeptide N-tetradecanoyltransferase 2 (430 aa).

Residues 47–50 (HKFW), 181–183 (LCV), and 189–193 (SKGLA) contribute to the tetradecanoyl-CoA site. Residue L430 is the Proton acceptor; via carboxylate of the active site.

It belongs to the NMT family.

The enzyme catalyses N-terminal glycyl-[protein] + tetradecanoyl-CoA = N-tetradecanoylglycyl-[protein] + CoA + H(+). Functionally, may add a myristoyl group to the N-terminal glycine residue of certain cellular proteins. The sequence is that of Putative glycylpeptide N-tetradecanoyltransferase 2 (NMT2) from Arabidopsis thaliana (Mouse-ear cress).